Reading from the N-terminus, the 125-residue chain is Small ribosomal subunit protein uS13 (125 aa).

A disordered region spans residues 95 to 125 (GLPLRGQRTKTNARTRKGKRKTVANKKIASK).

It belongs to the universal ribosomal protein uS13 family. Part of the 30S ribosomal subunit. Forms a loose heterodimer with protein S19. Forms two bridges to the 50S subunit in the 70S ribosome.

Its function is as follows. Located at the top of the head of the 30S subunit, it contacts several helices of the 16S rRNA. In the 70S ribosome it contacts the 23S rRNA (bridge B1a) and protein L5 of the 50S subunit (bridge B1b), connecting the 2 subunits; these bridges are implicated in subunit movement. Contacts the tRNAs in the A and P-sites. The polypeptide is Small ribosomal subunit protein uS13 (Borrelia garinii subsp. bavariensis (strain ATCC BAA-2496 / DSM 23469 / PBi) (Borreliella bavariensis)).